The primary structure comprises 179 residues: ATP synthase subunit delta (179 aa).

The protein belongs to the ATPase delta chain family. As to quaternary structure, F-type ATPases have 2 components, F(1) - the catalytic core - and F(0) - the membrane proton channel. F(1) has five subunits: alpha(3), beta(3), gamma(1), delta(1), epsilon(1). F(0) has three main subunits: a(1), b(2) and c(10-14). The alpha and beta chains form an alternating ring which encloses part of the gamma chain. F(1) is attached to F(0) by a central stalk formed by the gamma and epsilon chains, while a peripheral stalk is formed by the delta and b chains.

The protein localises to the cell membrane. Functionally, f(1)F(0) ATP synthase produces ATP from ADP in the presence of a proton or sodium gradient. F-type ATPases consist of two structural domains, F(1) containing the extramembraneous catalytic core and F(0) containing the membrane proton channel, linked together by a central stalk and a peripheral stalk. During catalysis, ATP synthesis in the catalytic domain of F(1) is coupled via a rotary mechanism of the central stalk subunits to proton translocation. This protein is part of the stalk that links CF(0) to CF(1). It either transmits conformational changes from CF(0) to CF(1) or is implicated in proton conduction. The polypeptide is ATP synthase subunit delta (Staphylococcus aureus (strain USA300 / TCH1516)).